The sequence spans 240 residues: Ribonuclease HII (240 aa).

Residues 31-222 (RLIAGVDEAG…VRRALGLETA (192 aa)) enclose the RNase H type-2 domain. A divalent metal cation is bound by residues D37, E38, and D130.

The protein belongs to the RNase HII family. Requires Mn(2+) as cofactor. The cofactor is Mg(2+).

Its subcellular location is the cytoplasm. The enzyme catalyses Endonucleolytic cleavage to 5'-phosphomonoester.. Endonuclease that specifically degrades the RNA of RNA-DNA hybrids. This Xanthomonas campestris pv. campestris (strain 8004) protein is Ribonuclease HII.